Reading from the N-terminus, the 374-residue chain is Glutamate 5-kinase (374 aa).

Residue K16 coordinates ATP. Substrate contacts are provided by S56, D143, and N155. Residue 175 to 176 (TD) participates in ATP binding. A PUA domain is found at 282–360 (KGCFVVDEGA…TRIEEILGYV (79 aa)).

Belongs to the glutamate 5-kinase family.

It is found in the cytoplasm. The catalysed reaction is L-glutamate + ATP = L-glutamyl 5-phosphate + ADP. It functions in the pathway amino-acid biosynthesis; L-proline biosynthesis; L-glutamate 5-semialdehyde from L-glutamate: step 1/2. In terms of biological role, catalyzes the transfer of a phosphate group to glutamate to form L-glutamate 5-phosphate. The protein is Glutamate 5-kinase of Methylococcus capsulatus (strain ATCC 33009 / NCIMB 11132 / Bath).